The sequence spans 89 residues: Small ribosomal subunit protein uS15 (89 aa).

Belongs to the universal ribosomal protein uS15 family. In terms of assembly, part of the 30S ribosomal subunit. Forms a bridge to the 50S subunit in the 70S ribosome, contacting the 23S rRNA.

Functionally, one of the primary rRNA binding proteins, it binds directly to 16S rRNA where it helps nucleate assembly of the platform of the 30S subunit by binding and bridging several RNA helices of the 16S rRNA. Forms an intersubunit bridge (bridge B4) with the 23S rRNA of the 50S subunit in the ribosome. The protein is Small ribosomal subunit protein uS15 of Geobacillus thermodenitrificans (strain NG80-2).